The primary structure comprises 805 residues: Transitional endoplasmic reticulum ATPase (805 aa).

S3 is modified (phosphoserine). Residues 247–253 (PGTGKTL), N348, H384, and 521–526 (GCGKTL) each bind ATP. The disordered stretch occupies residues 768 to 805 (FGSFRFPAGGQGGAGPSQGAGGGSGGSHFNEEEDDLYG). The span at 776 to 793 (GGQGGAGPSQGAGGGSGG) shows a compositional bias: gly residues.

The protein belongs to the AAA ATPase family. As to quaternary structure, homohexamer. Forms a ring-shaped particle of 12.5 nm diameter, that displays 6-fold radial symmetry. Interacts with the FACT/DUF complex, which includes subunits ssrp1/duf87 and supt16h/duf140. In terms of processing, phosphorylated.

The protein resides in the cytoplasm. It localises to the cytosol. It is found in the endoplasmic reticulum. Its subcellular location is the nucleus. The protein localises to the stress granule. The catalysed reaction is ATP + H2O = ADP + phosphate + H(+). With respect to regulation, ATPase activity is inhibited or reduced by lowering pH from 9.0 to 7.0, and by addition of Ca(2+), EDTA, KNO(3) or by treatment with N-ethylmaleimide (NEM). Necessary for the fragmentation of Golgi stacks during mitosis and for their reassembly after mitosis. Involved in the formation of the nuclear envelope, and of the transitional endoplasmic reticulum (tER). The transfer of membranes from the endoplasmic reticulum to the Golgi apparatus occurs via 50-70 nm transition vesicles which derive from part-rough, part-smooth transitional elements of the endoplasmic reticulum (tER). Vesicle budding from the tER is an ATP-dependent process. Involved in endoplasmic reticulum stress-induced pre-emptive quality control, a mechanism that selectively attenuates the translocation of newly synthesized proteins into the endoplasmic reticulum and reroutes them to the cytosol for proteasomal degradation. Involved in clearance process by mediating G3BP1 extraction from stress granules. Also involved in DNA damage response: recruited to double-strand breaks (DSBs) sites and promotes the recruitment of tp53bp1 at DNA damage sites. Together with sprtn metalloprotease, involved in the repair of covalent DNA-protein cross-links (DPCs) during DNA synthesis. Involved in interstrand cross-link repair in response to replication stress by mediating unloading of the ubiquitinated CMG helicase complex. Enhances cell cycle progression and inhibits apoptosis at low temperatures. Essential for the maturation of ubiquitin-containing autophagosomes and the clearance of ubiquitinated protein by autophagy. Acts as a negative regulator of type I interferon production by promoting ubiquitination of rigi. May play a role in the ubiquitin-dependent sorting of membrane proteins to lysosomes where they undergo degradation. May more particularly play a role in caveolins sorting in cells. By controlling the steady-state expression of the IGF1R receptor, indirectly regulates the insulin-like growth factor receptor signaling pathway. This is Transitional endoplasmic reticulum ATPase from Xenopus tropicalis (Western clawed frog).